The sequence spans 1365 residues: Serine/threonine-protein kinase LMTK1 (1365 aa).

Residues 32 to 52 form a helical membrane-spanning segment; that stretch reads LAVVAVSFSGIFTVVILMLAC. The region spanning 126–396 is the Protein kinase domain; that stretch reads LLYLKEIGHG…PTAEEVHLLL (271 aa). ATP contacts are provided by residues 132–140 and K157; that span reads IGHGWFGKV. D254 functions as the Proton acceptor in the catalytic mechanism. Position 500 is a phosphoserine (S500). Disordered regions lie at residues 550-623, 638-698, 791-1186, 1237-1293, and 1343-1365; these read PDCA…LPAE, DDPL…GYVS, QEAE…PAVP, ESPT…EWDG, and ISDSDAQSVGGPAAGAGGRYTEA. Residues 560 to 575 are compositionally biased toward polar residues; the sequence is QAVTDQDNNSEESTVA. 2 stretches are compositionally biased toward low complexity: residues 638-655 and 675-686; these read DDPLGASPSGSPGAQPSP and SSNMSANNNSAS. Polar residues-rich tracts occupy residues 848-860 and 869-879; these read LESSGSSLGQEAP and EATSGVFTDLS. 2 stretches are compositionally biased toward low complexity: residues 904-918 and 981-993; these read PDSLDSLDIPSSASD and PLLSVSLGGLSKK. Residues 1015 to 1030 are compositionally biased toward basic and acidic residues; the sequence is PEKHSGIQDSQKEQDL. S1035 is subject to Phosphoserine. The span at 1037–1053 shows a compositional bias: polar residues; the sequence is GHQSVQAFPRSAVSSEV. Residues 1072–1083 are compositionally biased toward low complexity; the sequence is PLGAQGPVGVQP. The span at 1104–1132 shows a compositional bias: polar residues; it reads GSGTEPQGPSGQLSGRAQQGQMGNPSTPR. Positions 1150–1164 are enriched in acidic residues; it reads PEEDEDTEDSEESDE. Phosphothreonine is present on T1156. Phosphoserine is present on residues S1159, S1162, S1175, S1178, and S1253. Positions 1354–1365 are enriched in gly residues; it reads PAAGAGGRYTEA.

It belongs to the protein kinase superfamily. Tyr protein kinase family. As to quaternary structure, interacts with CDK5. Post-translationally, autophosphorylated. Phosphorylated by CDK5. In terms of tissue distribution, expressed in brain, and, to a lower extent, in kidney, heart, lung and skeletal muscle. In the brain, expressed in the olfactory bulb, cerebellum, striatum, hippocampal formation, thalamus, hypothalamus, and pontine nuclei (at protein level).

The protein resides in the membrane. It localises to the cytoplasm. Its subcellular location is the perinuclear region. It is found in the cell projection. The protein localises to the dendrite. The protein resides in the axon. It localises to the growth cone. The catalysed reaction is L-seryl-[protein] + ATP = O-phospho-L-seryl-[protein] + ADP + H(+). It carries out the reaction L-threonyl-[protein] + ATP = O-phospho-L-threonyl-[protein] + ADP + H(+). Its function is as follows. May be involved in neuronal differentiation. In Mus musculus (Mouse), this protein is Serine/threonine-protein kinase LMTK1 (Aatk).